Here is a 30-residue protein sequence, read N- to C-terminus: Alpha-defensin PhD-4 (30 aa).

Cystine bridges form between cysteine 2/cysteine 30, cysteine 4/cysteine 19, and cysteine 9/cysteine 29.

Its subcellular location is the secreted. In terms of biological role, in low salt conditions, has antibacterial activity against the Gram-negative bacterium E.coli ML35p (MIC=2.4 uM), the Gram-positive bacteria L.monocytogenes EGD (MIC=2.2 uM) and methicillin-resistant S.aureus ATCC 33591 (MIC=3.5 uM), and the fungus C.albicans 820 (MIC=3.9 uM). At high physiological salt concentrations the antimicrobial activity decreases significantly: E.coli ML35p (MIC=7.1 uM), L.monocytogenes EGD (MIC=1.8 uM), S.aureus ATCC 33591 (MIC=&gt;50 uM), and C.albicans 820 (MIC=&gt;50 uM). This is Alpha-defensin PhD-4 from Papio hamadryas (Hamadryas baboon).